The chain runs to 628 residues: DEAD-box ATP-dependent RNA helicase 9 (628 aa).

The Q motif signature appears at 98–126 (LEVAKLGISPKIVSQLASRGITKLFPIQR). A Helicase ATP-binding domain is found at 129 to 302 (LEPAMQGKDM…QKYLKNPVTI (174 aa)). 142–149 (AKTGTGKT) contributes to the ATP binding site. Residues 250 to 253 (DEAD) carry the DEAD box motif. A Helicase C-terminal domain is found at 331-478 (VLGELIKEHA…KINVEGSDLM (148 aa)). 2 disordered regions span residues 496 to 548 (GSYG…SGFG) and 571 to 628 (SGFG…FGSS). Positions 500–509 (RRGSFGSSSS) are enriched in low complexity. Residues 510–548 (RGGGFGDSGFGRSGGGFGRSGGGGFGRSSGGGFGDSGFG) show a composition bias toward gly residues.

Belongs to the DEAD box helicase family. DDX21/DDX50 subfamily.

The enzyme catalyses ATP + H2O = ADP + phosphate + H(+). This Oryza sativa subsp. japonica (Rice) protein is DEAD-box ATP-dependent RNA helicase 9.